The following is a 180-amino-acid chain: Dual-action ribosomal maturation protein DarP (180 aa).

It belongs to the DarP family.

It is found in the cytoplasm. In terms of biological role, member of a network of 50S ribosomal subunit biogenesis factors which assembles along the 30S-50S interface, preventing incorrect 23S rRNA structures from forming. Promotes peptidyl transferase center (PTC) maturation. The polypeptide is Dual-action ribosomal maturation protein DarP (Pasteurella multocida (strain Pm70)).